The chain runs to 142 residues: Hemoglobin subunit alpha (142 aa).

Positions 2–142 constitute a Globin domain; it reads VLSSADKNNV…VSTVLTSKYR (141 aa). S4 is modified (phosphoserine). K8 and K12 each carry N6-succinyllysine. Residue K17 is modified to N6-acetyllysine; alternate. K17 carries the post-translational modification N6-succinyllysine; alternate. Y25 carries the phosphotyrosine modification. At S36 the chain carries Phosphoserine. At K41 the chain carries N6-succinyllysine. At S50 the chain carries Phosphoserine. H59 provides a ligand contact to O2. H88 lines the heme b pocket. The residue at position 103 (S103) is a Phosphoserine. At T109 the chain carries Phosphothreonine. The residue at position 125 (S125) is a Phosphoserine. Phosphothreonine occurs at positions 135 and 138. The residue at position 139 (S139) is a Phosphoserine.

Belongs to the globin family. As to quaternary structure, heterotetramer of two alpha chains and two beta chains. In terms of tissue distribution, red blood cells.

Functionally, involved in oxygen transport from the lung to the various peripheral tissues. In terms of biological role, hemopressin acts as an antagonist peptide of the cannabinoid receptor CNR1. Hemopressin-binding efficiently blocks cannabinoid receptor CNR1 and subsequent signaling. The protein is Hemoglobin subunit alpha (HBA) of Panthera leo (Lion).